A 147-amino-acid polypeptide reads, in one-letter code: UPF0306 protein KPK_0562 (147 aa).

The protein belongs to the UPF0306 family.

The chain is UPF0306 protein KPK_0562 from Klebsiella pneumoniae (strain 342).